Consider the following 121-residue polypeptide: uncharacterized protein (121 aa).

3 consecutive transmembrane segments (helical) span residues 2–22, 42–62, and 89–109; these read VFVT…IYTI, FICI…YILF, and IFFA…LSIF.

Its subcellular location is the membrane. This is an uncharacterized protein from Saccharomyces cerevisiae (strain ATCC 204508 / S288c) (Baker's yeast).